Here is a 424-residue protein sequence, read N- to C-terminus: UPF0229 protein Ping_2705 (424 aa).

The disordered stretch occupies residues 77–108; it reads PGNQDFIGGDRIERPPSGGAGGSGSGASDSGK.

This sequence belongs to the UPF0229 family.

The protein is UPF0229 protein Ping_2705 of Psychromonas ingrahamii (strain DSM 17664 / CCUG 51855 / 37).